The chain runs to 247 residues: 3-deoxy-manno-octulosonate cytidylyltransferase (247 aa).

It belongs to the KdsB family.

The protein localises to the cytoplasm. It carries out the reaction 3-deoxy-alpha-D-manno-oct-2-ulosonate + CTP = CMP-3-deoxy-beta-D-manno-octulosonate + diphosphate. It participates in nucleotide-sugar biosynthesis; CMP-3-deoxy-D-manno-octulosonate biosynthesis; CMP-3-deoxy-D-manno-octulosonate from 3-deoxy-D-manno-octulosonate and CTP: step 1/1. It functions in the pathway bacterial outer membrane biogenesis; lipopolysaccharide biosynthesis. Activates KDO (a required 8-carbon sugar) for incorporation into bacterial lipopolysaccharide in Gram-negative bacteria. The polypeptide is 3-deoxy-manno-octulosonate cytidylyltransferase (Bdellovibrio bacteriovorus (strain ATCC 15356 / DSM 50701 / NCIMB 9529 / HD100)).